A 483-amino-acid chain; its full sequence is Iroquois-class homeodomain protein IRX-5 (483 aa).

The homeobox; TALE-type DNA-binding region spans 113-175 (DPAYRKNATR…NARRRLKKEN (63 aa)). Disordered regions lie at residues 177–392 (MTWT…QCPF) and 423–442 (GHPG…FNGL). Acidic residues predominate over residues 186 to 203 (EDEEEEENIDLEKNDEDE). Basic and acidic residues-rich tracts occupy residues 204–213 (PQKPEDKGDP) and 250–261 (SDFKEPPSEGRL). 2 stretches are compositionally biased toward low complexity: residues 266–282 (GPPR…AAAR) and 374–388 (SRAS…SPSA). Ser274 carries the post-translational modification Phosphoserine. Ser464 carries the post-translational modification Phosphoserine.

It belongs to the TALE/IRO homeobox family.

The protein resides in the nucleus. Its function is as follows. Establishes the cardiac repolarization gradient by its repressive actions on the KCND2 potassium-channel gene. Required for retinal cone bipolar cell differentiation. May regulate contrast adaptation in the retina and control specific aspects of visual function in circuits of the mammalian retina. Could be involved in the regulation of both the cell cycle and apoptosis in prostate cancer cells. Involved in craniofacial and gonadal development. Modulates the migration of progenitor cell populations in branchial arches and gonads by repressing CXCL12. This Homo sapiens (Human) protein is Iroquois-class homeodomain protein IRX-5 (IRX5).